Here is a 154-residue protein sequence, read N- to C-terminus: UPF0178 protein in pahZ1 5'region (154 aa).

This sequence belongs to the UPF0178 family.

This is UPF0178 protein in pahZ1 5'region from Paucimonas lemoignei (Pseudomonas lemoignei).